The chain runs to 208 residues: Protein disulfide-isomerase A3 (208 aa).

The Thioredoxin 1 domain maps to 1 to 44 (RLAPEYEAAATRYGVSGYPTLKDGEEAGAYDGPRTADGIVSHLK). Lys-44 is modified (N6-succinyllysine). Lys-49 carries the N6-acetyllysine modification. Residue Thr-133 is modified to Phosphothreonine. A Thioredoxin 2 domain is found at 151-208 (SRFLQDYFDGNLKRYLKSEPIPETNDGPVKMDATANDVPSPYEVKGFPTIYFSPANKK). Lys-163 is modified (N6-acetyllysine).

The protein belongs to the protein disulfide isomerase family. In terms of assembly, part of the major histocompatibility complex class I (MHC I) peptide loading complex composed of TAP1, TAP2, B2M, MHC heavy chain, TAPBP, PDIA3, and CALR. Interacts with ERP27 and CANX. Interacts with SERPINA2 and SERPINA1. Interacts with ATP2A2. Post-translationally, within the major histocompatibility complex class I (MHC I) peptide loading complex forms reversible disulfide-linked heterodimers with TAPBP as part of its protein folding chaperone activity. This is essential to assist the dynamic assembly of the MHC I complex with high affinity antigens in the endoplasmic reticulum. In terms of processing, phosphorylated. In terms of tissue distribution, in the caput epididymal spermatozoa, detected in the mid-peice and at low levels in the principal piece. In the cauda epididymal spermatozoa, detected at very low levels in the principal piece and not in the mid-piece (at protein level).

It localises to the endoplasmic reticulum. It is found in the endoplasmic reticulum lumen. The protein localises to the melanosome. The catalysed reaction is Catalyzes the rearrangement of -S-S- bonds in proteins.. In terms of biological role, protein disulfide isomerase that catalyzes the formation, isomerization, and reduction or oxidation of disulfide bonds in client proteins and functions as a protein folding chaperone. Core component of the major histocompatibility complex class I (MHC I) peptide loading complex where it functions as an essential folding chaperone for TAPBP. Through TAPBP, assists the dynamic assembly of the MHC I complex with high affinity antigens in the endoplasmic reticulum. Therefore, plays a crucial role in the presentation of antigens to cytotoxic T cells in adaptive immunity. The protein is Protein disulfide-isomerase A3 of Mesocricetus auratus (Golden hamster).